The sequence spans 80 residues: Small ribosomal subunit protein uS17 (80 aa).

It belongs to the universal ribosomal protein uS17 family. Part of the 30S ribosomal subunit.

In terms of biological role, one of the primary rRNA binding proteins, it binds specifically to the 5'-end of 16S ribosomal RNA. The protein is Small ribosomal subunit protein uS17 of Cereibacter sphaeroides (strain ATCC 17029 / ATH 2.4.9) (Rhodobacter sphaeroides).